The sequence spans 573 residues: Sulfite reductase [NADPH] hemoprotein beta-component (573 aa).

Residues cysteine 438, cysteine 444, cysteine 483, and cysteine 487 each contribute to the [4Fe-4S] cluster site. Cysteine 487 contributes to the siroheme binding site.

Belongs to the nitrite and sulfite reductase 4Fe-4S domain family. Alpha(8)-beta(8). The alpha component is a flavoprotein, the beta component is a hemoprotein. It depends on siroheme as a cofactor. [4Fe-4S] cluster serves as cofactor.

The enzyme catalyses hydrogen sulfide + 3 NADP(+) + 3 H2O = sulfite + 3 NADPH + 4 H(+). Its pathway is sulfur metabolism; hydrogen sulfide biosynthesis; hydrogen sulfide from sulfite (NADPH route): step 1/1. Component of the sulfite reductase complex that catalyzes the 6-electron reduction of sulfite to sulfide. This is one of several activities required for the biosynthesis of L-cysteine from sulfate. This chain is Sulfite reductase [NADPH] hemoprotein beta-component, found in Nitrosomonas europaea (strain ATCC 19718 / CIP 103999 / KCTC 2705 / NBRC 14298).